Reading from the N-terminus, the 485-residue chain is Glutamate--tRNA ligase (485 aa).

The 'HIGH' region signature appears at Pro-12–Thr-22. Residues Cys-109, Cys-111, Cys-136, and His-138 each contribute to the Zn(2+) site. The 'KMSKS' region motif lies at Lys-253–Arg-257. Lys-256 is a binding site for ATP.

This sequence belongs to the class-I aminoacyl-tRNA synthetase family. Glutamate--tRNA ligase type 1 subfamily. Monomer. Zn(2+) serves as cofactor.

The protein resides in the cytoplasm. It catalyses the reaction tRNA(Glu) + L-glutamate + ATP = L-glutamyl-tRNA(Glu) + AMP + diphosphate. Catalyzes the attachment of glutamate to tRNA(Glu) in a two-step reaction: glutamate is first activated by ATP to form Glu-AMP and then transferred to the acceptor end of tRNA(Glu). This is Glutamate--tRNA ligase from Agrobacterium fabrum (strain C58 / ATCC 33970) (Agrobacterium tumefaciens (strain C58)).